Here is a 436-residue protein sequence, read N- to C-terminus: C4-dicarboxylate transport protein 2 (436 aa).

A run of 9 helical transmembrane segments spans residues 14-34 (VLVA…TAVA), 45-65 (LIKM…IAGM), 77-97 (MALL…LVVV), 142-162 (VVGA…VLFG), 198-218 (PIGA…GSLV), 223-243 (LMLC…GGIA), 290-310 (VVGL…SIYL), 331-351 (ITLL…TGSG), and 353-373 (IVLA…LALI). The segment at 414-436 (ELAGEGNASSPASDIPVGGREAV) is disordered.

The protein belongs to the dicarboxylate/amino acid:cation symporter (DAACS) (TC 2.A.23) family.

The protein resides in the cell inner membrane. In terms of biological role, responsible for the transport of dicarboxylates such as succinate, fumarate, and malate from the periplasm across the membrane. This Pseudomonas paraeruginosa (strain DSM 24068 / PA7) (Pseudomonas aeruginosa (strain PA7)) protein is C4-dicarboxylate transport protein 2.